Here is a 316-residue protein sequence, read N- to C-terminus: Pantothenate kinase (316 aa).

Residue 95–102 participates in ATP binding; sequence GSVAVGKS.

Belongs to the prokaryotic pantothenate kinase family.

It is found in the cytoplasm. It catalyses the reaction (R)-pantothenate + ATP = (R)-4'-phosphopantothenate + ADP + H(+). Its pathway is cofactor biosynthesis; coenzyme A biosynthesis; CoA from (R)-pantothenate: step 1/5. This chain is Pantothenate kinase, found in Shewanella sp. (strain ANA-3).